The following is a 541-amino-acid chain: Chaperonin GroEL (541 aa).

ATP contacts are provided by residues 29 to 32 (TLGP), 86 to 90 (DGTTT), glycine 413, 478 to 480 (DAL), and aspartate 494.

This sequence belongs to the chaperonin (HSP60) family. Forms a cylinder of 14 subunits composed of two heptameric rings stacked back-to-back. Interacts with the co-chaperonin GroES.

It localises to the cytoplasm. It catalyses the reaction ATP + H2O + a folded polypeptide = ADP + phosphate + an unfolded polypeptide.. Its function is as follows. Together with its co-chaperonin GroES, plays an essential role in assisting protein folding. The GroEL-GroES system forms a nano-cage that allows encapsulation of the non-native substrate proteins and provides a physical environment optimized to promote and accelerate protein folding. This Alkaliphilus oremlandii (strain OhILAs) (Clostridium oremlandii (strain OhILAs)) protein is Chaperonin GroEL.